A 359-amino-acid chain; its full sequence is Membrane-bound lytic murein transglycosylase C (359 aa).

Positions 1–16 are cleaved as a signal peptide; the sequence is MKKYLALALIAPLLIS. The N-palmitoyl cysteine moiety is linked to residue Cys17. The S-diacylglycerol cysteine moiety is linked to residue Cys17.

This sequence belongs to the transglycosylase Slt family.

The protein localises to the cell outer membrane. The catalysed reaction is Exolytic cleavage of the (1-&gt;4)-beta-glycosidic linkage between N-acetylmuramic acid (MurNAc) and N-acetylglucosamine (GlcNAc) residues in peptidoglycan, from either the reducing or the non-reducing ends of the peptidoglycan chains, with concomitant formation of a 1,6-anhydrobond in the MurNAc residue.. Functionally, murein-degrading enzyme. May play a role in recycling of muropeptides during cell elongation and/or cell division. The polypeptide is Membrane-bound lytic murein transglycosylase C (Escherichia coli (strain SE11)).